Here is a 403-residue protein sequence, read N- to C-terminus: MLTQKTKDIVKATAPVLAQHGYAIIQHFYKRMFQAHPELKNIFNMAHQERGEQQQALARAVYAYAANIENPESLSAVLKDIAHKHASLGVRPEQYPIVGEHLLASIKEVLGDAATDEIISAWAQAYGNLADILAGMESELYERSEERAGGWAGWRRFIVREKNPESDVITSFVLEPADGGPVADFEPGQYTSVAVQVPKLGYQQIRQYSLSDSPNGRSYRISVKREDGGLGTPGYVSSLLHDEINVGDELKLAAPYGNFYIDVSATTPIVLISGGVGLTPMVSMLKKALQTPPRKVVFVHGARNSAVHAMRDRLKEASRTYPDFKLFIFYDEPLPTDIEGRDYDFAGLVDVEKVKDSILLDDADYYICGPVPFMRMQHDKLLGLGITEARIHYEVFGPDLFAE.

Residues 1 to 138 (MLTQKTKDIV…LADILAGMES (138 aa)) form the Globin domain. Heme b is bound at residue His85. Catalysis depends on charge relay system residues Tyr95 and Glu137. Residues 149–403 (GGWAGWRRFI…EVFGPDLFAE (255 aa)) form a reductase region. Residues 152–262 (AGWRRFIVRE…AAPYGNFYID (111 aa)) enclose the FAD-binding FR-type domain. FAD contacts are provided by residues Tyr190 and 206 to 209 (RQYS). 275–280 (GVGLTP) provides a ligand contact to NADP(+). FAD is bound at residue 395-398 (VFGP).

The protein belongs to the globin family. Two-domain flavohemoproteins subfamily. It in the C-terminal section; belongs to the flavoprotein pyridine nucleotide cytochrome reductase family. It depends on heme b as a cofactor. FAD is required as a cofactor.

It catalyses the reaction 2 nitric oxide + NADPH + 2 O2 = 2 nitrate + NADP(+) + H(+). The enzyme catalyses 2 nitric oxide + NADH + 2 O2 = 2 nitrate + NAD(+) + H(+). Is involved in NO detoxification in an aerobic process, termed nitric oxide dioxygenase (NOD) reaction that utilizes O(2) and NAD(P)H to convert NO to nitrate, which protects the bacterium from various noxious nitrogen compounds. Therefore, plays a central role in the inducible response to nitrosative stress. This is Flavohemoprotein from Rhizobium meliloti (strain 1021) (Ensifer meliloti).